We begin with the raw amino-acid sequence, 82 residues long: Acyl carrier protein (82 aa).

Residues Pro-4–Gln-79 enclose the Carrier domain. O-(pantetheine 4'-phosphoryl)serine is present on Ser-39.

The protein belongs to the acyl carrier protein (ACP) family. Post-translationally, 4'-phosphopantetheine is transferred from CoA to a specific serine of apo-ACP by AcpS. This modification is essential for activity because fatty acids are bound in thioester linkage to the sulfhydryl of the prosthetic group.

The protein localises to the cytoplasm. Its pathway is lipid metabolism; fatty acid biosynthesis. Its function is as follows. Carrier of the growing fatty acid chain in fatty acid biosynthesis. The sequence is that of Acyl carrier protein from Chloroflexus aurantiacus (strain ATCC 29366 / DSM 635 / J-10-fl).